An 86-amino-acid polypeptide reads, in one-letter code: UPF0473 protein Clos_1662 (86 aa).

Belongs to the UPF0473 family.

This chain is UPF0473 protein Clos_1662, found in Alkaliphilus oremlandii (strain OhILAs) (Clostridium oremlandii (strain OhILAs)).